The chain runs to 209 residues: Mitochondrial import inner membrane translocase subunit Tim23 (209 aa).

A run of 3 helical transmembrane segments spans residues 73–93 (FELA…FGAM), 125–145 (ALWA…GVII), and 172–194 (GGLR…YALY).

The protein belongs to the Tim17/Tim22/Tim23 family. In terms of assembly, component of the TIM23 complex at least composed of TIMM23, TIMM17 (TIMM17A or TIMM17B) and TIMM50; within this complex, directly interacts with TIMM50. The complex interacts with the TIMM44 component of the PAM complex and with DNAJC15. Upon mitochondrial depolarization, interacts with PINK1; the interaction is required for PINK1 accumulation at the outer mitochondrial membrane, kinase activation by autophosphorylation and PRKN recruitement to mitochondria.

It is found in the mitochondrion inner membrane. In terms of biological role, essential component of the TIM23 complex, a complex that mediates the translocation of transit peptide-containing proteins across the mitochondrial inner membrane. Has a role in the activation of stress-induced mitophagy by protecting PINK1 from OMA1-mediated degradation and facilitating its accumulation at the outer mitochondrial membrane in response to depolarization. This chain is Mitochondrial import inner membrane translocase subunit Tim23 (TIMM23), found in Pongo abelii (Sumatran orangutan).